The chain runs to 958 residues: Nuclear factor NF-kappa-B p100 subunit (958 aa).

The region spanning 40–230 (LLMSYLSIIE…DPIHDSKSPG (191 aa)) is the RHD domain. A Nuclear localization signal motif is present at residues 343–347 (RKRRK). 2 disordered regions span residues 350-374 (PTFN…SFGQ) and 411-442 (CSAT…QTDS). The tract at residues 352–390 (FNNHFYGGGSPMGGAPPGSSFGQGGGSNINYQYTGMNSA) is GRR. Residues 357–374 (YGGGSPMGGAPPGSSFGQ) show a composition bias toward gly residues. Polar residues predominate over residues 412–425 (SATNSSEKNQQPSI). ANK repeat units follow at residues 500 to 529 (NGDT…SIPN), 539 to 568 (LQQT…DPTI), 572 to 603 (YGNS…QKNL), 610 to 639 (HGLS…NVNS), 644 to 674 (SGKS…DINA), and 678 to 707 (GGNT…NVLS). The interval 705–766 (VLSENDEPVN…SAEEMHRREQ (62 aa)) is disordered. Residues 724-734 (SESDSDVQMDT) are compositionally biased toward acidic residues. Over residues 753 to 766 (ECEHSAEEMHRREQ) the composition is skewed to basic and acidic residues. One can recognise a Death domain in the interval 815–901 (VNVLALETNT…EGVELLCKSE (87 aa)). Over residues 904-916 (AKHHSPAESKNDS) the composition is skewed to basic and acidic residues. A disordered region spans residues 904–958 (AKHHSPAESKNDSAYESQSMEVDQSSGNLMDDSQKQTIPVSAAELCPTTEPTIGQ). Residues 917–931 (AYESQSMEVDQSSGN) show a composition bias toward polar residues.

As to quaternary structure, active NF-kappa-B is a heterodimer of an about 52 kDa DNA-binding subunit and the weak DNA-binding subunit p65. Two heterodimers might form a labile tetramer. Post-translationally, while translation occurs, the particular unfolded structure after the GRR repeat promotes the generation of p52 making it an acceptable substrate for the proteasome. This process is known as cotranslational processing. The processed form is active and the unprocessed form acts as an inhibitor (I kappa B-like), being able to form cytosolic complexes with NF-kappa B, trapping it in the cytoplasm. Complete folding of the region downstream of the GRR repeat precludes processing. Constitutive processing is tightly suppressed by its C-terminal processing inhibitory domain, named PID, which contains the death domain. As to expression, expressed in spleen.

It is found in the nucleus. The protein localises to the cytoplasm. In terms of biological role, appears to have dual functions such as cytoplasmic retention of attached NF-kappa-B proteins and generation of p52 by a cotranslational processing. The proteasome-mediated process ensures the production of both p52 and p100 and preserves their independent function. p52 binds to the kappa-B consensus sequence 5'-GGRNNYYCC-3', located in the enhancer region of genes involved in immune response and acute phase reactions. In concert with RELB, may play a role in the regulation of the circadian clock. The sequence is that of Nuclear factor NF-kappa-B p100 subunit (nfkb2) from Xenopus laevis (African clawed frog).